Here is a 100-residue protein sequence, read N- to C-terminus: NADH-quinone oxidoreductase subunit K (100 aa).

A run of 3 helical transmembrane segments spans residues 1 to 21, 28 to 48, and 64 to 84; these read MIGL…GLAG, ILLL…GFVA, and FIIA…ILWF.

The protein belongs to the complex I subunit 4L family. NDH-1 is composed of 14 different subunits. Subunits NuoA, H, J, K, L, M, N constitute the membrane sector of the complex.

Its subcellular location is the cell inner membrane. It catalyses the reaction a quinone + NADH + 5 H(+)(in) = a quinol + NAD(+) + 4 H(+)(out). Functionally, NDH-1 shuttles electrons from NADH, via FMN and iron-sulfur (Fe-S) centers, to quinones in the respiratory chain. The immediate electron acceptor for the enzyme in this species is believed to be ubiquinone. Couples the redox reaction to proton translocation (for every two electrons transferred, four hydrogen ions are translocated across the cytoplasmic membrane), and thus conserves the redox energy in a proton gradient. This Helicobacter pylori (strain P12) protein is NADH-quinone oxidoreductase subunit K.